We begin with the raw amino-acid sequence, 367 residues long: Alanine racemase (367 aa).

Catalysis depends on Lys40, which acts as the Proton acceptor; specific for D-alanine. The residue at position 40 (Lys40) is an N6-(pyridoxal phosphate)lysine. Arg136 contributes to the substrate binding site. The active-site Proton acceptor; specific for L-alanine is the Tyr263. A substrate-binding site is contributed by Met310.

This sequence belongs to the alanine racemase family. Requires pyridoxal 5'-phosphate as cofactor.

It carries out the reaction L-alanine = D-alanine. It functions in the pathway amino-acid biosynthesis; D-alanine biosynthesis; D-alanine from L-alanine: step 1/1. Its function is as follows. Catalyzes the interconversion of L-alanine and D-alanine. May also act on other amino acids. This Streptococcus pneumoniae (strain ATCC 700669 / Spain 23F-1) protein is Alanine racemase (alr).